A 312-amino-acid chain; its full sequence is UDP-N-acetylenolpyruvoylglucosamine reductase (312 aa).

In terms of domain architecture, FAD-binding PCMH-type spans G24 to E206. R166 is an active-site residue. Catalysis depends on S217, which acts as the Proton donor. E307 is a catalytic residue.

Belongs to the MurB family. It depends on FAD as a cofactor.

Its subcellular location is the cytoplasm. It catalyses the reaction UDP-N-acetyl-alpha-D-muramate + NADP(+) = UDP-N-acetyl-3-O-(1-carboxyvinyl)-alpha-D-glucosamine + NADPH + H(+). The protein operates within cell wall biogenesis; peptidoglycan biosynthesis. In terms of biological role, cell wall formation. The polypeptide is UDP-N-acetylenolpyruvoylglucosamine reductase (Solibacter usitatus (strain Ellin6076)).